The sequence spans 344 residues: Phosphate acyltransferase (344 aa).

The protein belongs to the PlsX family. In terms of assembly, homodimer. Probably interacts with PlsY.

The protein resides in the cytoplasm. It catalyses the reaction a fatty acyl-[ACP] + phosphate = an acyl phosphate + holo-[ACP]. The protein operates within lipid metabolism; phospholipid metabolism. Functionally, catalyzes the reversible formation of acyl-phosphate (acyl-PO(4)) from acyl-[acyl-carrier-protein] (acyl-ACP). This enzyme utilizes acyl-ACP as fatty acyl donor, but not acyl-CoA. This chain is Phosphate acyltransferase, found in Erwinia tasmaniensis (strain DSM 17950 / CFBP 7177 / CIP 109463 / NCPPB 4357 / Et1/99).